An 85-amino-acid polypeptide reads, in one-letter code: Toxin TdNa9 (85 aa).

Residues 1 to 21 form the signal peptide; the sequence is MLKFAIAVALLLFIGLELREA. In terms of domain architecture, LCN-type CS-alpha/beta spans 22–84; it reads RDGYPQSKVN…YGDPGTKPCM (63 aa). 4 disulfides stabilise this stretch: Cys33-Cys83, Cys37-Cys58, Cys43-Cys63, and Cys47-Cys65.

This sequence belongs to the long (4 C-C) scorpion toxin superfamily. Sodium channel inhibitor family. Beta subfamily. As to expression, expressed by the venom gland.

It localises to the secreted. Alpha toxins bind voltage-independently at site-3 of sodium channels (Nav) and inhibit the inactivation of the activated channels, thereby blocking neuronal transmission. This toxin binds, in vitro, to sodium channels and inhibits the inactivation of the activated channels. Seems not toxic to mice, crickets and sweet-water shrimps. The protein is Toxin TdNa9 of Tityus discrepans (Venezuelan scorpion).